A 259-amino-acid chain; its full sequence is Phosphatidylglycerol--prolipoprotein diacylglyceryl transferase (259 aa).

4 helical membrane passes run leucine 12–alanine 32, isoleucine 46–valine 66, isoleucine 83–valine 103, and valine 109–isoleucine 129. Residue arginine 131 participates in a 1,2-diacyl-sn-glycero-3-phospho-(1'-sn-glycerol) binding. A run of 3 helical transmembrane segments spans residues valine 167–tryptophan 187, leucine 194–isoleucine 214, and glycine 226–phenylalanine 246.

Belongs to the Lgt family.

The protein localises to the cell membrane. The enzyme catalyses L-cysteinyl-[prolipoprotein] + a 1,2-diacyl-sn-glycero-3-phospho-(1'-sn-glycerol) = an S-1,2-diacyl-sn-glyceryl-L-cysteinyl-[prolipoprotein] + sn-glycerol 1-phosphate + H(+). It participates in protein modification; lipoprotein biosynthesis (diacylglyceryl transfer). Catalyzes the transfer of the diacylglyceryl group from phosphatidylglycerol to the sulfhydryl group of the N-terminal cysteine of a prolipoprotein, the first step in the formation of mature lipoproteins. In Streptococcus equi subsp. zooepidemicus (strain H70), this protein is Phosphatidylglycerol--prolipoprotein diacylglyceryl transferase.